The following is a 946-amino-acid chain: Bifunctional glutamine synthetase adenylyltransferase/adenylyl-removing enzyme (946 aa).

Positions 1–440 are adenylyl removase; that stretch reads MKPLSSPLQQ…VFNELIGDDE (440 aa). Positions 449 to 946 are adenylyl transferase; it reads SEQWRELWQD…ASWQKWLVEE (498 aa).

It belongs to the GlnE family. Mg(2+) serves as cofactor.

The enzyme catalyses [glutamine synthetase]-O(4)-(5'-adenylyl)-L-tyrosine + phosphate = [glutamine synthetase]-L-tyrosine + ADP. It carries out the reaction [glutamine synthetase]-L-tyrosine + ATP = [glutamine synthetase]-O(4)-(5'-adenylyl)-L-tyrosine + diphosphate. In terms of biological role, involved in the regulation of glutamine synthetase GlnA, a key enzyme in the process to assimilate ammonia. When cellular nitrogen levels are high, the C-terminal adenylyl transferase (AT) inactivates GlnA by covalent transfer of an adenylyl group from ATP to specific tyrosine residue of GlnA, thus reducing its activity. Conversely, when nitrogen levels are low, the N-terminal adenylyl removase (AR) activates GlnA by removing the adenylyl group by phosphorolysis, increasing its activity. The regulatory region of GlnE binds the signal transduction protein PII (GlnB) which indicates the nitrogen status of the cell. In Shigella boydii serotype 4 (strain Sb227), this protein is Bifunctional glutamine synthetase adenylyltransferase/adenylyl-removing enzyme.